The sequence spans 359 residues: Fructose-bisphosphate aldolase class 2 (359 aa).

Position 62 (Ser-62) interacts with D-glyceraldehyde 3-phosphate. The Proton donor role is filled by Asp-110. His-111, Asp-145, Glu-175, and His-227 together coordinate Zn(2+). Position 228 (Gly-228) interacts with dihydroxyacetone phosphate. A Zn(2+)-binding site is contributed by His-265. Dihydroxyacetone phosphate contacts are provided by residues 266–268 and 287–290; these read GGS and NIDT.

Belongs to the class II fructose-bisphosphate aldolase family. The cofactor is Zn(2+).

The catalysed reaction is beta-D-fructose 1,6-bisphosphate = D-glyceraldehyde 3-phosphate + dihydroxyacetone phosphate. It functions in the pathway carbohydrate degradation; glycolysis; D-glyceraldehyde 3-phosphate and glycerone phosphate from D-glucose: step 4/4. Functionally, catalyzes the aldol condensation of dihydroxyacetone phosphate (DHAP or glycerone-phosphate) with glyceraldehyde 3-phosphate (G3P) to form fructose 1,6-bisphosphate (FBP) in gluconeogenesis and the reverse reaction in glycolysis. This chain is Fructose-bisphosphate aldolase class 2 (fbaA), found in Buchnera aphidicola subsp. Baizongia pistaciae (strain Bp).